We begin with the raw amino-acid sequence, 610 residues long: UvrABC system protein C (610 aa).

Residues 16–94 (SQPGVYRMYD…IKLYQPRYNV (79 aa)) enclose the GIY-YIG domain. Positions 204-239 (DQVLTQLIARMEKASQDLAFEEAARIRDQIQAVRRV) constitute a UVR domain.

Belongs to the UvrC family. As to quaternary structure, interacts with UvrB in an incision complex.

It is found in the cytoplasm. Functionally, the UvrABC repair system catalyzes the recognition and processing of DNA lesions. UvrC both incises the 5' and 3' sides of the lesion. The N-terminal half is responsible for the 3' incision and the C-terminal half is responsible for the 5' incision. This Salmonella dublin (strain CT_02021853) protein is UvrABC system protein C.